The primary structure comprises 1274 residues: Myosin-binding protein C, cardiac-type (1274 aa).

N-acetylmethionine is present on M1. S47 bears the Phosphoserine mark. The segment covering 107-141 (APAPAEATGAPGEAPAPAAELGESAPSPKGSSSAA) has biased composition (low complexity). The tract at residues 107-153 (APAPAEATGAPGEAPAPAAELGESAPSPKGSSSAALNGPTPGAPDDP) is disordered. The 104-residue stretch at 153 to 256 (PIGLFVMRPQ…FDCSNFNLTV (104 aa)) folds into the Ig-like C2-type 1 domain. Positions 208, 210, 223, and 225 each coordinate Zn(2+). 3 positions are modified to phosphoserine; by PKA and PKC: S275, S284, and S304. A phosphoserine mark is found at S311 and S427. 4 Ig-like C2-type domains span residues 362–452 (STAF…VKEP), 453–543 (PVLI…VQEK), 544–633 (KLEV…HFME), and 645–771 (PKIH…VIDV). C436 and C443 are oxidised to a cystine. S550 is modified (phosphoserine). T607 is subject to Phosphothreonine. Fibronectin type-III domains follow at residues 774–870 (APAA…IGPP) and 872–967 (EPTH…VQEI). The Ig-like C2-type 6 domain maps to 971–1065 (PRLQLPRHLR…ATLVLQVVDK (95 aa)). Positions 1068-1163 (PPQDLRVTDA…TKEPVFIPRP (96 aa)) constitute a Fibronectin type-III 3 domain. An Ig-like C2-type 7 domain is found at 1181–1274 (PSFTQPLVNR…ECRLEVRVPQ (94 aa)). Residue R1241 is modified to Omega-N-methylarginine.

It belongs to the immunoglobulin superfamily. MyBP family. Post-translationally, substrate for phosphorylation by PKA and PKC. Reversible phosphorylation appears to modulate contraction. Polyubiquitinated.

Thick filament-associated protein located in the crossbridge region of vertebrate striated muscle a bands. In vitro it binds MHC, F-actin and native thin filaments, and modifies the activity of actin-activated myosin ATPase. It may modulate muscle contraction or may play a more structural role. This is Myosin-binding protein C, cardiac-type (MYBPC3) from Homo sapiens (Human).